Reading from the N-terminus, the 424-residue chain is FeMo cofactor biosynthesis protein NifB (424 aa).

Residues 12–261 (NDSSRHTYGR…PQMKHCARCR (250 aa)) form the Radical SAM core domain. [4Fe-4S] cluster contacts are provided by cysteine 30, cysteine 34, and cysteine 37. The S-adenosyl-L-methionine site is built by glycine 84, threonine 136, and valine 188. [4Fe-4S] cluster contacts are provided by cysteine 257 and cysteine 260.

The protein belongs to the radical SAM superfamily. NifB family. As to quaternary structure, monomer. It depends on [4Fe-4S] cluster as a cofactor.

It participates in cofactor biosynthesis; Fe-Mo cofactor biosynthesis. Functionally, involved in the biosynthesis of the iron-molybdenum cofactor (FeMo-co or M-cluster) found in the dinitrogenase enzyme of the nitrogenase complex in nitrogen-fixing microorganisms. NifB catalyzes the crucial step of radical SAM-dependent carbide insertion that occurs concomitant with the insertion of a 9th sulfur and the rearrangement/coupling of two [4Fe-4S] clusters into a [8Fe-9S-C] cluster, the precursor to the M-cluster. This Chlorobaculum tepidum (strain ATCC 49652 / DSM 12025 / NBRC 103806 / TLS) (Chlorobium tepidum) protein is FeMo cofactor biosynthesis protein NifB.